Reading from the N-terminus, the 97-residue chain is Large ribosomal subunit protein eL21 (97 aa).

Belongs to the eukaryotic ribosomal protein eL21 family.

The protein is Large ribosomal subunit protein eL21 of Methanospirillum hungatei JF-1 (strain ATCC 27890 / DSM 864 / NBRC 100397 / JF-1).